We begin with the raw amino-acid sequence, 428 residues long: E3 ubiquitin-protein ligase RNF128 (428 aa).

The N-terminal stretch at 1–38 (MGPPPGAGVSCRGGCGFSRLLAWCFLLALSPQAPGSRG) is a signal peptide. 3 N-linked (GlcNAc...) asparagine glycosylation sites follow: N48, N59, and N101. One can recognise a PA domain in the interval 75 to 183 (SPLEPVAGVL…LKGTKILQSI (109 aa)). Residues 208-228 (IFFVSVSFFIITAATVGYFIF) traverse the membrane as a helical segment. The RING-type; atypical zinc finger occupies 277 to 318 (CAVCIELYKPNDLVRILTCNHIFHKTCVDPWLLEHRTCPMCK). Residues 346 to 428 (ISNSASSHEE…QETAVREIKS (83 aa)) are disordered. Residues 360-371 (ETASSGYASVQG) show a composition bias toward polar residues.

In terms of processing, auto-ubiquitinated. Controls the development of T-cell clonal anergy by ubiquitination.

It is found in the cytoplasm. It localises to the endomembrane system. The protein localises to the cytoskeleton. The protein resides in the perinuclear region. The enzyme catalyses S-ubiquitinyl-[E2 ubiquitin-conjugating enzyme]-L-cysteine + [acceptor protein]-L-lysine = [E2 ubiquitin-conjugating enzyme]-L-cysteine + N(6)-ubiquitinyl-[acceptor protein]-L-lysine.. Its pathway is protein modification; protein ubiquitination. Its function is as follows. E3 ubiquitin-protein ligase that catalyzes 'Lys-27', 'Lys-48'- or 'Lys-63'-linked polyubiquitin chains formation and plays a role in different biological processes such as modulation of immune response, cytoskeletal dynamics or protein homeostasis. Inhibits IL2 and IL4 transcription, thereby playing an important role in the induction of the anergic phenotype, a long-term stable state of T-lymphocyte unresponsiveness to antigenic stimulation associated with the blockade of interleukin production. Ubiquitinates ARPC5 with 'Lys-48' linkages and COR1A with 'Lys-63' linkages leading to their degradation, down-regulation of these cytoskeletal components results in impaired lamellipodium formation and reduced accumulation of F-actin at the immunological synapse. Functions in the patterning of the dorsal ectoderm; sensitizes ectoderm to respond to neural-inducing signals. Plays a positive role in innate immune response by promoting 'Lys-63'-linked ubiquitination of TBK1 after RNA- or DNA-virus infection. Regulates alveolar macrophage activation and neutrophil infiltration by interacting with TLR4, targeting it for degradation, and inhibiting NF-kappa-B activation, hence decreasing pro-inflammatory cytokines. Negatively regulates the IL-3/STAT5 signaling pathway by facilitating 'Lys-27'-linked polyubiquitination of IL3RA leading to its degradation via lysosomal pathway. Directly regulates the N-glycosylation process in the endoplasmic reticulum by targeting the glycosyl-transferase RPN1 for ubiquitination and degradation. Other substrates targeted for degradation by RNF128 include transmembrane proteins CD40L, CD83 or the tetraspanin CD151. The protein is E3 ubiquitin-protein ligase RNF128 (RNF128) of Homo sapiens (Human).